Here is a 204-residue protein sequence, read N- to C-terminus: uncharacterized protein (204 aa).

It localises to the cytoplasm. Its subcellular location is the nucleus. This is an uncharacterized protein from Schizosaccharomyces pombe (strain 972 / ATCC 24843) (Fission yeast).